The sequence spans 181 residues: TATA-box-binding protein (181 aa).

A run of 2 repeats spans residues 8 to 84 (IENI…VDMM) and 99 to 175 (IQNI…KARL).

It belongs to the TBP family.

In terms of biological role, general factor that plays a role in the activation of archaeal genes transcribed by RNA polymerase. Binds specifically to the TATA box promoter element which lies close to the position of transcription initiation. This Methanothermobacter thermautotrophicus (strain ATCC 29096 / DSM 1053 / JCM 10044 / NBRC 100330 / Delta H) (Methanobacterium thermoautotrophicum) protein is TATA-box-binding protein (tbp).